The following is a 196-amino-acid chain: Cupin-domain-containing oxidoreductase srdD (196 aa).

Residues 99–165 (DFGPGVESPL…GNGTLPGRVM (67 aa)) form a cupin-like domain region.

Belongs to the virC family.

Highly reducing polyketide synthase; part of the gene cluster that mediates the biosynthesis of sordarial, a salicylic aldehyde structurally related to the phytotoxin pyriculol. The most interesting aspect of this pathway is formation of an aromatic product from the highly reducing polyketide synthase srdA. SrdA synthesizes a reduced polyketide chain from one molecule of acetyl-CoA and five molecules of malonyl-CoA. The polyketide chain is then reductively released as an aldehyde. The oxidoreductases srdC, srdD and srdE then oxidize one of the hydroxy groups to facilitate the intramolecular aldol condensation, followed by dehydration to yield a salicylic aldehyde. This aldehyde can undergo facile reduction by endogenous reductases to yield the alcohol 1-hydroxy-2-hydroxymethyl-3-pent-1,3-dienylbenzene. The flavin-dependent srdI counteract against the propensity of the aldehydes to be reduced under physiological conditions and is responsible for reoxidizing 1-hydroxy-2-hydroxymethyl-3-pent-1,3-dienylbenzene back to the salicylic aldehyde. This salicylic aldehyde is then selectively epoxidized by the cupin-domain-containing oxidoreductase srdB to yield the epoxide, which can be hydrolyzed stereoselectively by the hydrolase srdG to give the final product sordarial. This is Cupin-domain-containing oxidoreductase srdD from Neurospora crassa (strain ATCC 24698 / 74-OR23-1A / CBS 708.71 / DSM 1257 / FGSC 987).